Consider the following 544-residue polypeptide: CTP synthase (544 aa).

The interval 1–267 (MAKFVFITGG…AQRVLQILNL (267 aa)) is amidoligase domain. S13 serves as a coordination point for CTP. Residue S13 coordinates UTP. 14–19 (SIGKGI) serves as a coordination point for ATP. Residue Y54 participates in L-glutamine binding. Residue D71 coordinates ATP. Residues D71 and E141 each contribute to the Mg(2+) site. Residues 148 to 150 (DIE), 188 to 193 (KTKPTQ), and K224 each bind CTP. Residues 188 to 193 (KTKPTQ) and K224 contribute to the UTP site. The 243-residue stretch at 292 to 534 (EIAIVGKYVR…IEAALRSRSR (243 aa)) folds into the Glutamine amidotransferase type-1 domain. G354 lines the L-glutamine pocket. The active-site Nucleophile; for glutamine hydrolysis is C381. Residues 382–385 (LGMQ), E405, and R462 each bind L-glutamine. Active-site residues include H507 and E509.

Belongs to the CTP synthase family. Homotetramer.

It carries out the reaction UTP + L-glutamine + ATP + H2O = CTP + L-glutamate + ADP + phosphate + 2 H(+). It catalyses the reaction L-glutamine + H2O = L-glutamate + NH4(+). The catalysed reaction is UTP + NH4(+) + ATP = CTP + ADP + phosphate + 2 H(+). The protein operates within pyrimidine metabolism; CTP biosynthesis via de novo pathway; CTP from UDP: step 2/2. Its activity is regulated as follows. Allosterically activated by GTP, when glutamine is the substrate; GTP has no effect on the reaction when ammonia is the substrate. The allosteric effector GTP functions by stabilizing the protein conformation that binds the tetrahedral intermediate(s) formed during glutamine hydrolysis. Inhibited by the product CTP, via allosteric rather than competitive inhibition. Its function is as follows. Catalyzes the ATP-dependent amination of UTP to CTP with either L-glutamine or ammonia as the source of nitrogen. Regulates intracellular CTP levels through interactions with the four ribonucleotide triphosphates. The polypeptide is CTP synthase (Synechococcus sp. (strain JA-3-3Ab) (Cyanobacteria bacterium Yellowstone A-Prime)).